A 141-amino-acid chain; its full sequence is uncharacterized protein (141 aa).

It is found in the mitochondrion. This is an uncharacterized protein from Arabidopsis thaliana (Mouse-ear cress).